Here is a 66-residue protein sequence, read N- to C-terminus: Large ribosomal subunit protein bL35 (66 aa).

The interval 22–41 (VMSAQRGKRHGMIKRTKKQI) is disordered. The span at 27–41 (RGKRHGMIKRTKKQI) shows a compositional bias: basic residues.

This sequence belongs to the bacterial ribosomal protein bL35 family.

This chain is Large ribosomal subunit protein bL35, found in Rhodopseudomonas palustris (strain TIE-1).